Here is a 518-residue protein sequence, read N- to C-terminus: Ell-associated factor Eaf (518 aa).

Composition is skewed to polar residues over residues 119-128 (KTRSEMTNKP) and 163-182 (ENST…SRRN). Disordered regions lie at residues 119 to 216 (KTRS…PAWH) and 241 to 518 (ALHN…DDDD). At Ser-192 the chain carries Phosphoserine. Composition is skewed to polar residues over residues 253–265 (ANIS…SSVG) and 274–284 (MGKQRQASSQG). The segment covering 289-342 (QQQTQRSSPPMQQQQQQQNYGRGGANNNYAQQLHQQQQQQQQQQLQQQQQQMQQ) has biased composition (low complexity). Polar residues predominate over residues 343 to 355 (RASFSHSNHSNSM). The span at 368 to 377 (AAQSMAQAAA) shows a compositional bias: low complexity. Acidic residues predominate over residues 397–412 (ESSDSDSGSDSDDSTE). 3 stretches are compositionally biased toward low complexity: residues 418–428 (HQQQQPPGQLS), 463–476 (QQQQ…QQQQ), and 500–518 (NDLL…DDDD).

Belongs to the EAF family.

Its subcellular location is the nucleus. Functionally, promotes transcriptional elongation by Su(Tpl)/ELL. Essential for development. This chain is Ell-associated factor Eaf, found in Drosophila mojavensis (Fruit fly).